Reading from the N-terminus, the 87-residue chain is MAHKKGVGSSKNGRESASKRLGVKIFGGQACKAGNIIVRQRGTEFHPGENIGMGRDHTLFALVDGTVCFKVGRNDRRSVSVVPAVEA.

Belongs to the bacterial ribosomal protein bL27 family.

The chain is Large ribosomal subunit protein bL27 from Phocaeicola vulgatus (strain ATCC 8482 / DSM 1447 / JCM 5826 / CCUG 4940 / NBRC 14291 / NCTC 11154) (Bacteroides vulgatus).